Consider the following 147-residue polypeptide: 3-dehydroquinate dehydratase (147 aa).

Catalysis depends on Y23, which acts as the Proton acceptor. Substrate is bound by residues N75, H81, and D88. Catalysis depends on H101, which acts as the Proton donor. Residues 102 to 103 (LS) and R112 each bind substrate.

The protein belongs to the type-II 3-dehydroquinase family. Homododecamer.

It catalyses the reaction 3-dehydroquinate = 3-dehydroshikimate + H2O. Its pathway is metabolic intermediate biosynthesis; chorismate biosynthesis; chorismate from D-erythrose 4-phosphate and phosphoenolpyruvate: step 3/7. Catalyzes a trans-dehydration via an enolate intermediate. The polypeptide is 3-dehydroquinate dehydratase (Stutzerimonas stutzeri (strain A1501) (Pseudomonas stutzeri)).